Here is a 121-residue protein sequence, read N- to C-terminus: Large ribosomal subunit protein uL24 (121 aa).

The protein belongs to the universal ribosomal protein uL24 family. In terms of assembly, part of the 50S ribosomal subunit.

In terms of biological role, one of two assembly initiator proteins, it binds directly to the 5'-end of the 23S rRNA, where it nucleates assembly of the 50S subunit. Its function is as follows. Located at the polypeptide exit tunnel on the outside of the subunit. In Pyrococcus furiosus (strain ATCC 43587 / DSM 3638 / JCM 8422 / Vc1), this protein is Large ribosomal subunit protein uL24.